Consider the following 864-residue polypeptide: Receptor like protein 24 (864 aa).

The first 29 residues, 1-29 (MKTVFKSLLLLHFLLLLLLCFVSPSSFFL), serve as a signal peptide directing secretion. Topologically, residues 30–830 (LKVPVGGLVA…EEKGEVINWK (801 aa)) are extracellular. 4 N-linked (GlcNAc...) asparagine glycosylation sites follow: N61, N73, N94, and N112. 15 LRR repeats span residues 100-125 (FHQL…FCNL), 127-148 (KLKL…DLMG), 156-182 (LGKL…LFEL), 183-205 (HSLR…KFGN), 207-229 (NKLE…TISN), 230-253 (LTRI…VQNL), 254-277 (TKLS…LFTF), 279-303 (SLST…STSS), 305-326 (LEIM…ISKL), 327-350 (INLK…LLSP), 351-376 (LKSL…SYIP), 378-398 (SMES…ILKH), 399-423 (LQNL…LWTL), 425-448 (QLSF…VFVN), and 449-472 (LSVR…PLSI). N-linked (GlcNAc...) asparagine glycans are attached at residues N176, N194, N229, and N252. The N-linked (GlcNAc...) asparagine glycan is linked to N298. The N-linked (GlcNAc...) asparagine glycan is linked to N338. Residues N433 and N448 are each glycosylated (N-linked (GlcNAc...) asparagine). The stretch at 473-492 (IGFSAIHNSFTGEIPLSICN) is one LRR 16; degenerate repeat. N-linked (GlcNAc...) asparagine glycosylation is found at N492 and N505. LRR repeat units follow at residues 493–514 (RTSL…PQCL), 515–538 (SNFM…FYTD), 539–562 (SSLK…LLNC), 564–585 (SLRF…WLKA), 586–610 (LPNL…HQGP), 613–637 (FPEL…FFVN), 688–712 (LTSY…IGLL), 713–735 (KALI…SFAN), 736–760 (LMNL…LGSL), and 762–785 (FLVY…QITG). Residue N561 is glycosylated (N-linked (GlcNAc...) asparagine). N719 carries an N-linked (GlcNAc...) asparagine glycan. A helical membrane pass occupies residues 831-851 (AVAIGYAPGLLFGLAIAHLIA). Topologically, residues 852-864 (SYKPEWLVKIIGF) are cytoplasmic.

It belongs to the RLP family.

Its subcellular location is the cell membrane. In Arabidopsis thaliana (Mouse-ear cress), this protein is Receptor like protein 24.